A 1887-amino-acid polypeptide reads, in one-letter code: Nuclear pore membrane glycoprotein 210 (1887 aa).

The N-terminal stretch at 1-26 (MAARGRGLLLLTLSVLLAAGPSAAAA) is a signal peptide. Over 27 to 1808 (KLNIPKVLLP…LFQHFLDSYQ (1782 aa)) the chain is Perinuclear space. Asn44, Asn337, Asn405, Asn484, Asn681, Asn801, Asn926, Asn1039, Asn1116, Asn1135, Asn1362, and Asn1441 each carry an N-linked (GlcNAc...) asparagine glycan. In terms of domain architecture, BIG2 spans 1078–1151 (FPPFRLMPRK…VQAVDAETGK (74 aa)). Residues 1809 to 1829 (VMFFTLFALLAGTAVMIIAYH) traverse the membrane as a helical segment. The Cytoplasmic segment spans residues 1830-1887 (TVCTPRDLAVPAALTPRASPGHSPHYFAASSPTSPNALPPARKASPPSGLWSPAYASH). Residue Thr1844 is modified to Phosphothreonine. The segment at 1853–1887 (PHYFAASSPTSPNALPPARKASPPSGLWSPAYASH) is disordered. Residues Ser1874, Ser1877, Ser1881, and Ser1886 each carry the phosphoserine modification.

The protein belongs to the NUP210 family. In terms of assembly, forms dimers and possibly higher-order oligomers. In terms of processing, N-glycosylated, but not all potential glycosylation sites may be used. Contains high-mannose type oligosaccharides. Phosphorylated at Ser-1881 in mitosis specifically; not phosphorylated in interphase. As to expression, ubiquitous expression, with highest levels in lung, liver, pancreas, testis, and ovary, intermediate levels in brain, kidney, and spleen, and lowest levels in heart and skeletal muscle.

It is found in the nucleus. It localises to the nuclear pore complex. Its subcellular location is the nucleus membrane. The protein localises to the endoplasmic reticulum membrane. Functionally, nucleoporin essential for nuclear pore assembly and fusion, nuclear pore spacing, as well as structural integrity. The polypeptide is Nuclear pore membrane glycoprotein 210 (NUP210) (Homo sapiens (Human)).